A 463-amino-acid polypeptide reads, in one-letter code: Glycine--tRNA ligase (463 aa).

The substrate site is built by arginine 100 and glutamate 175. ATP is bound by residues 207-209, 217-222, 291-292, and 335-338; these read RNE, FRTREF, EL, and GADR. 222–226 lines the substrate pocket; sequence FEQME. 331-335 contributes to the substrate binding site; that stretch reads EPSVG.

This sequence belongs to the class-II aminoacyl-tRNA synthetase family. As to quaternary structure, homodimer.

The protein localises to the cytoplasm. The catalysed reaction is tRNA(Gly) + glycine + ATP = glycyl-tRNA(Gly) + AMP + diphosphate. Its function is as follows. Catalyzes the attachment of glycine to tRNA(Gly). The chain is Glycine--tRNA ligase from Clostridium kluyveri (strain NBRC 12016).